The sequence spans 305 residues: Glycine--tRNA ligase alpha subunit (305 aa).

The protein belongs to the class-II aminoacyl-tRNA synthetase family. In terms of assembly, tetramer of two alpha and two beta subunits.

The protein resides in the cytoplasm. It carries out the reaction tRNA(Gly) + glycine + ATP = glycyl-tRNA(Gly) + AMP + diphosphate. This chain is Glycine--tRNA ligase alpha subunit, found in Streptococcus pyogenes serotype M18 (strain MGAS8232).